The following is a 552-amino-acid chain: MKEAFVFLLCLTNKFPKKFNSCSKKKETLYVLGLVLLVSFIEAPVTKPNFGKFIECLRDRTTPENPITDVISIADNSTTFLSSYVSYTKNKRFSSPNFKKLLAIIAAKHVSHVQATVVCAKSNGIQLRIRSGGHDNEGFSYMSSVPFVILDMHNLRSIDVNLSRKNAWVQAGATLGELYVKINEASQTLAFPAGVCPTVGAGGHISGGGFGNLMRKFGITVDHVIDAQIIDVNGKLLNRAAMGEDLFWAIRGGGSSFGVILSWKINLVEVPKILTVFKVNKTLEQGGTDILYKWQLVANKLPDSLFITAWPRTVNGPKPGERTVAVVFYAQFLGPTDKLMEIMDQSFPELGLGREDCHEMSWLNTTLFWANYPAGTPKSILLDRPPTNSVSFKSKSDFVKKPIPKKGLEKLWKTMFKFNSSVSLQFNPYGGVMDRIPATATAFPHRKGNLFKVQYSTMWFDANATESSLAMMNELFEVAEPYVSSNPREAFFNFRDIDIGSNPSGETNVDEAKIYGSKYFLGNLKRLMDVKAKYDPDNFFKNEQSIPPVRVK.

Positions 1 to 16 (MKEAFVFLLCLTNKFP) are cleaved as a signal peptide. The cysteines at positions 56 and 119 are disulfide-linked. Residues asparagine 76, asparagine 161, asparagine 280, asparagine 364, asparagine 419, and asparagine 463 are each glycosylated (N-linked (GlcNAc...) asparagine). The FAD-binding PCMH-type domain maps to 93–270 (FSSPNFKKLL…LSWKINLVEV (178 aa)). Positions 134–196 (HDNEGFSYMS…QTLAFPAGVC (63 aa)) form a cross-link, 6-(S-cysteinyl)-8alpha-(pros-histidyl)-FAD (His-Cys).

This sequence belongs to the oxygen-dependent FAD-linked oxidoreductase family. It depends on FAD as a cofactor. Post-translationally, the FAD cofactor is bound via a bicovalent 6-S-cysteinyl, 8alpha-N1-histidyl FAD linkage.

Its subcellular location is the secreted. The protein localises to the cell wall. Probable flavin-dependent oxidoreductase. In Arabidopsis thaliana (Mouse-ear cress), this protein is Berberine bridge enzyme-like 6.